The chain runs to 267 residues: UPF0246 protein Dshi_3333 (267 aa).

Belongs to the UPF0246 family.

The chain is UPF0246 protein Dshi_3333 from Dinoroseobacter shibae (strain DSM 16493 / NCIMB 14021 / DFL 12).